The following is a 587-amino-acid chain: GATA zinc finger domain-containing protein 3 (587 aa).

Residues 53 to 74 (NINNNINNNNNNNNNNNNNNIN) are compositionally biased toward low complexity. 3 disordered regions span residues 53–141 (NINN…LKIP), 179–294 (QLAH…SSPS), and 312–392 (QTSP…ATIN). Over residues 75 to 86 (QYHQNHYDQYSD) the composition is skewed to polar residues. 5 stretches are compositionally biased toward low complexity: residues 87–136 (NNCN…NNNN), 183–202 (NSSM…TPTS), 237–264 (NING…INNG), 272–292 (GNNN…NSSS), and 316–333 (SQQS…QQSQ). Composition is skewed to polar residues over residues 340–358 (INTT…TNSP) and 365–379 (NESS…TPLS). The GATA-type zinc finger occupies 500–525 (CIFCGTMETPEWRKGPGGHKTLCNAC). The interval 536–587 (ENQNNGGSPNPQQNNVTTTTTTTTSTSTNSPNSNGNNFSPESAMSVSKLISD) is disordered. The span at 538-575 (QNNGGSPNPQQNNVTTTTTTTTSTSTNSPNSNGNNFSP) shows a compositional bias: low complexity. A compositionally biased stretch (polar residues) spans 577–587 (SAMSVSKLISD).

The protein is GATA zinc finger domain-containing protein 3 (gtaC) of Dictyostelium discoideum (Social amoeba).